A 471-amino-acid chain; its full sequence is Protein hedgehog (471 aa).

Residue C85 is the site of N-palmitoyl cysteine attachment. Ca(2+) contacts are provided by E149, E150, D155, T185, E186, D189, and D191. Residue G257 is the site of Cholesterol glycine ester attachment.

This sequence belongs to the hedgehog family. In terms of assembly, interacts with shf. Interacts with ptc and CG5504/l(2)tid. The C-terminal part of the hedgehog protein precursor displays an autoproteolysis activity that results in the cleavage of the full-length protein into two parts (N-product and C-product). In addition, the C-terminal part displays a cholesterol transferase activity that results by the covalent attachment of a cholesterol moiety to the C-terminal of the newly generated N-product. The N-product is the active species in both local and long-range signaling, whereas the C-product has no signaling activity. Post-translationally, cholesterylation is required for N-product targeting to lipid rafts and multimerization. In terms of processing, N-palmitoylation by Rasp of the hedgehog N-product, within the secretory pathway, is required for the embryonic and larval patterning activities of the hedgehog signal. In embryos, expression starts at stage 5 as a few stripes at the anterior and posterior ends, this expands to 17 stripes during stages 8-11. Expression is also seen in CNS and some PNS cells until stage 13-14, and in foregut, hindgut and salivary glands. In larvae, expression is seen in the posterior compartment of the wing, leg and antennal imaginal disks. In adults, high level of expression in specific regions of the proventriculus and hindgut, with slightly lower levels of expression in the posterior midgut. Relatively low levels of expression in the anterior midgut region.

The protein resides in the nucleus. The protein localises to the cytoplasm. It is found in the cell membrane. The catalysed reaction is glycyl-L-cysteinyl-[protein] + cholesterol + H(+) = [protein]-C-terminal glycyl cholesterol ester + N-terminal L-cysteinyl-[protein]. Its function is as follows. The C-terminal part of the hedgehog protein precursor displays an autoproteolysis activity that results in the cleavage of the full-length protein into two parts (N-product and C-product). In addition, the C-terminal part displays a cholesterol transferase activity that results by the covalent attachment of a cholesterol moiety to the C-terminal of the newly generated N-product. Once cleaved, the C-product has no signaling activity and diffuses from the cell. Functionally, the dually lipidated hedgehog protein N-product is a morphogen which is essential for a variety of patterning events during development. Establishes the anterior-posterior axis of the embryonic segments and patterns the larval imaginal disks. Binds to the patched (ptc) receptor, which functions in association with smoothened (smo), to activate the transcription of target genes wingless (wg), decapentaplegic (dpp) and ptc. In the absence of hh, ptc represses the constitutive signaling activity of smo through fused (fu). Essential component of a signaling pathway which regulates the Duox-dependent gut immune response to bacterial uracil; required to activate Cad99C-dependent endosome formation, norpA-dependent Ca2+ mobilization and p38 MAPK, which are essential steps in the Duox-dependent production of reactive oxygen species (ROS) in response to intestinal bacterial infection. During photoreceptor differentiation, it up-regulates transcription of Ubr3, which in turn promotes the hh-signaling pathway by mediating the ubiquitination and degradation of cos. This Drosophila melanogaster (Fruit fly) protein is Protein hedgehog.